Reading from the N-terminus, the 136-residue chain is Histone H3.3 type c (136 aa).

Positions 1 to 30 are disordered; sequence MARTKQTARKSTGAKVPRKHLSSKSSFPSK. Lys5 is subject to N6,N6,N6-trimethyllysine; by set1; alternate. Lys5 bears the N6,N6-dimethyllysine; by set1; alternate mark. Residues Lys5 and Lys10 each carry the N6-acetyllysine; alternate modification. Residue Lys5 is modified to N6-methyllysine; by set1; alternate. Lys10 is modified (N6,N6,N6-trimethyllysine; alternate). Lys10 is modified (N6,N6-dimethyllysine; alternate). The residue at position 10 (Lys10) is an N6-methyllysine; alternate. Ser11 is modified (phosphoserine). N6-acetyllysine is present on Lys15. N6-acetyllysine; alternate occurs at positions 19, 24, and 37. N6-methyllysine; alternate occurs at positions 19, 24, and 37. The residue at position 37 (Lys37) is an N6,N6,N6-trimethyllysine; alternate. N6,N6-dimethyllysine; alternate is present on Lys37. Lys57 is modified (N6-acetyllysine). The residue at position 80 (Lys80) is an N6,N6,N6-trimethyllysine; alternate. Lys80 carries the N6,N6-dimethyllysine; alternate modification. N6-methyllysine; alternate is present on Lys80.

This sequence belongs to the histone H3 family. In terms of assembly, the nucleosome is a histone octamer containing two molecules each of H2A, H2B, H3 and H4 assembled in one H3-H4 heterotetramer and two H2A-H2B heterodimers. The octamer wraps approximately 147 bp of DNA. Post-translationally, acetylation is generally linked to gene activation. Different methylation states of H3K4 mark distinct developmental phases. H3K4me2 is associated with euchromatic regions. H3K4me3 is a mark of active chromatin. set1 is responsible for all mono-, di- and tri-methylation of H3K4. H3K4me facilitates subsequent acetylation of H3 and H4. Methylation at H3K9 is linked to gene repression. In terms of processing, H3S10ph, which is linked to gene activation, prevents methylation at H3K9 but facilitates acetylation of H3 and H4.

Its subcellular location is the nucleus. It localises to the chromosome. In terms of biological role, core component of nucleosome. Nucleosomes wrap and compact DNA into chromatin, limiting DNA accessibility to the cellular machineries which require DNA as a template. Histones thereby play a central role in transcription regulation, DNA repair, DNA replication and chromosomal stability. DNA accessibility is regulated via a complex set of post-translational modifications of histones, also called histone code, and nucleosome remodeling. In Dictyostelium discoideum (Social amoeba), this protein is Histone H3.3 type c (H3c).